Reading from the N-terminus, the 860-residue chain is Leucine--tRNA ligase (860 aa).

Residues 42–52 (PYPSGRLHMGH) carry the 'HIGH' region motif. The short motif at 619–623 (KMSKS) is the 'KMSKS' region element. Residue lysine 622 coordinates ATP.

Belongs to the class-I aminoacyl-tRNA synthetase family.

The protein resides in the cytoplasm. The catalysed reaction is tRNA(Leu) + L-leucine + ATP = L-leucyl-tRNA(Leu) + AMP + diphosphate. The protein is Leucine--tRNA ligase of Salmonella typhimurium (strain LT2 / SGSC1412 / ATCC 700720).